The chain runs to 125 residues: Holo-[acyl-carrier-protein] synthase (125 aa).

2 residues coordinate Mg(2+): Asp-8 and Glu-57.

This sequence belongs to the P-Pant transferase superfamily. AcpS family. Mg(2+) serves as cofactor.

The protein resides in the cytoplasm. The enzyme catalyses apo-[ACP] + CoA = holo-[ACP] + adenosine 3',5'-bisphosphate + H(+). Transfers the 4'-phosphopantetheine moiety from coenzyme A to a Ser of acyl-carrier-protein. This Solibacter usitatus (strain Ellin6076) protein is Holo-[acyl-carrier-protein] synthase.